The chain runs to 493 residues: GPI alpha-1,6-mannosyltransferase 2 (493 aa).

Over 1-13 the chain is Cytoplasmic; it reads MGLLDPSQKEVLR. The chain crosses the membrane as a helical span at residues 14–34; sequence FAVNCRILTLVLQALFNLIIP. Residues 35–77 lie on the Lumenal side of the membrane; it reads DHHADAFCPPRLAPSGSADQLVEGLLGGLSRWDAEHFLFIAEH. Residues 78 to 98 form a helical membrane-spanning segment; that stretch reads GYLYEHNFAFFPGFPLALLMG. The Cytoplasmic portion of the chain corresponds to 99–113; the sequence is TELLRPLQGLLSQRS. A helical transmembrane segment spans residues 114–134; it reads CLLVSVALLNLLFSVLAAVAL. The Lumenal segment spans residues 135 to 136; the sequence is HD. Residues 137-157 traverse the membrane as a helical segment; sequence LGCLVLHCPRQALCAALLFCI. The Cytoplasmic segment spans residues 158–161; it reads SPAN. Residues 162-182 traverse the membrane as a helical segment; it reads VFLAAGYSEALFAFLTFSAMG. Over 183–192 the chain is Lumenal; sequence QLERGRGWAS. Residues 193–213 form a helical membrane-spanning segment; it reads GLLFALAAGVRSNGLVSLGFL. Over 214–234 the chain is Cytoplasmic; sequence LHSQCRGFCSSLAVLSPWKPL. A helical membrane pass occupies residues 235 to 255; it reads VKLMASVCLSVLIVSLPFALF. At 256 to 327 the chain is on the lumenal side; that stretch reads QYRAYIQFCS…RYYELKQVPN (72 aa). A helical transmembrane segment spans residues 328 to 348; the sequence is FLLATPVTVLVVWATWTYVTT. Topologically, residues 349-378 are cytoplasmic; it reads HPWLCLTLGLQRTKDRENPEKPHRGFLSPK. The helical transmembrane segment at 379–399 threads the bilayer; the sequence is VFVYLVHAAALLVFGGLCMHV. Topologically, residues 400–469 are lumenal; sequence QVLTRFLASS…DWKRCSPVTR (70 aa). The chain crosses the membrane as a helical span at residues 470–490; that stretch reads CVLVYFLTYWLLGLILHCNFL. Residues 491-493 are Cytoplasmic-facing; the sequence is PWT.

It belongs to the PIGV family. In terms of processing, not N-glycosylated.

The protein resides in the endoplasmic reticulum membrane. It participates in glycolipid biosynthesis; glycosylphosphatidylinositol-anchor biosynthesis. Functionally, alpha-1,6-mannosyltransferase that catalyzes the transfer of the second mannose, via an alpha-1,6 bond, from a dolichol-phosphate-mannose (Dol-P-Man) to the alpha-D-Man-(1-&gt;4)-alpha-D-GlcN-(1-&gt;6)-(1-radyl,2-acyl-sn-glycero-3-phospho)-2-acyl-inositol (also termed H2) intermediate to generate an alpha-D-Man-(1-&gt;6)-alpha-D-Man-(1-&gt;4)-alpha-D-GlcN-(1-&gt;6)-(1-radyl,2-acyl-sn-glycero-3-phospho)-2-acyl-inositol (also termed H3) and participates in the seventh step of the glycosylphosphatidylinositol-anchor biosynthesis. Also transfers the second mannose on a 2-PEtn-alpha-D-Man-(1-&gt;4)-alpha-D-GlcN-(1-&gt;6)-(1-radyl,2-acyl-sn-glycero-3-phospho)-2-acyl-inositol (also termed H5). This chain is GPI alpha-1,6-mannosyltransferase 2, found in Mus musculus (Mouse).